The chain runs to 257 residues: MITTSYRPSEHTIKTAKQLSKELNMPYCGRNKQTVEHLLKSAERDLLVVGKERFELYTKQGAKFFFHPNTAMFRAKRFLQGEKEPMLRAAGLSEGDTFLDCTLGLGSDAIIASMAVGETGSVVGIEKNHLVSVLVRTGLHSWETGIEELQAAMRRIQVKNGDCFEHIKQLPDNSVDVVYFDPMFHEPVETSDGIAPLRDLAEDSVLHEGCINEAVRVARKSVVLKDHWKSPRFEQFGFNVMKRKTALFHYGVIQTSP.

This is an uncharacterized protein from Bacillus subtilis (strain 168).